We begin with the raw amino-acid sequence, 593 residues long: Probable ubiquitin carboxyl-terminal hydrolase 4 (593 aa).

The region spanning 227–573 is the USP domain; the sequence is IGLTNLGNTC…SSYILFYKRS (347 aa). Cysteine 236 functions as the Nucleophile in the catalytic mechanism. Phosphoserine is present on residues serine 338 and serine 343. Catalysis depends on histidine 530, which acts as the Proton acceptor.

This sequence belongs to the peptidase C19 family. Interacts with sfp47.

The protein localises to the cytoplasm. It is found in the endosome. The enzyme catalyses Thiol-dependent hydrolysis of ester, thioester, amide, peptide and isopeptide bonds formed by the C-terminal Gly of ubiquitin (a 76-residue protein attached to proteins as an intracellular targeting signal).. Its function is as follows. Has an ATP-independent isopeptidase activity, cleaving at the C-terminus of the ubiquitin moiety. Acts late in the proteolytic pathway in conjunction with the 26S proteasome. Plays a role in avoiding DNA overreplication. This chain is Probable ubiquitin carboxyl-terminal hydrolase 4 (ubp4), found in Schizosaccharomyces pombe (strain 972 / ATCC 24843) (Fission yeast).